The following is a 164-amino-acid chain: UPF0114 protein YqhA (164 aa).

A run of 3 helical transmembrane segments spans residues leucine 15–phenylalanine 35, leucine 53–valine 73, and leucine 136–leucine 156.

It belongs to the UPF0114 family.

Its subcellular location is the cell membrane. The polypeptide is UPF0114 protein YqhA (Shigella dysenteriae serotype 1 (strain Sd197)).